A 1233-amino-acid chain; its full sequence is Protein Jumonji (1233 aa).

The span at 1–10 shows a compositional bias: basic residues; it reads MSKERPKRNI. Disordered regions lie at residues 1-22, 65-148, 165-335, 355-379, 423-451, and 466-542; these read MSKE…DGIP, NGQS…LSKR, PALP…VKYT, ETKL…ESSN, EGLR…MKGA, and KPLL…GWGM. The span at 84–96 shows a compositional bias: low complexity; it reads SQVSSTSNDISSS. The short motif at 102–108 is the Nuclear localization signal element; that stretch reads PSRKRPR. The segment covering 115–127 has biased composition (polar residues); it reads FAQSQPNSPSTTP. The sufficient for interaction with the PRC2 complex stretch occupies residues 139–168; that stretch reads ATQISDLSKRKPKTEDFLTFLCLRGSPALP. Over residues 178–191 the composition is skewed to acidic residues; it reads QDDEDEEEEEEETE. Polar residues-rich tracts occupy residues 195–208 and 216–228; these read TATN…QSTP and QVPN…GSSK. Over residues 229–262 the composition is skewed to basic and acidic residues; it reads SLKEKEPAQKHKSKEATPGKEKNSEHKAESRKDQ. Polar residues predominate over residues 268–285; that stretch reads HPTTNTGSSTKGLTANNH. Residues 309 to 318 are compositionally biased toward low complexity; that stretch reads SSPSANAASA. The segment covering 365–379 has biased composition (polar residues); sequence SPVNHTISGKLESSN. Basic and acidic residues-rich tracts occupy residues 423–440 and 473–485; these read EGLR…HIDK and LKKE…LERN. Polar residues predominate over residues 506–519; that stretch reads ENASCENRSTSQAE. Over residues 520 to 535 the composition is skewed to basic and acidic residues; it reads SLHKPQDSMGKHEKGS. The JmjN domain maps to 546–587; that stretch reads IPILRPSTKEFHDPLIYIESVRAQVEKYGMCRVIPPPDWRPE. Positions 610–702 constitute an ARID domain; that stretch reads WGPNVQRLAC…YLLSYDSLSP (93 aa). The GSGFP motif motif lies at 863-867; that stretch reads GSGFP. In terms of domain architecture, JmjC spans 873 to 1037; that stretch reads PFSRHGWNLT…MGFKTAKEMK (165 aa). The segment at 1197 to 1233 is disordered; the sequence is ENCISKPTPKRGPRKRATVDVPSSRLSSSSSSKSASS. Low complexity predominate over residues 1219 to 1233; that stretch reads SSRLSSSSSSKSASS.

It belongs to the JARID2 family. In terms of assembly, associates with the PRC2 complex.

It localises to the nucleus. Functionally, regulator of histone methyltransferase complexes that plays an essential role in embryonic development, including heart and liver development, neural tube fusion process and hematopoiesis. Acts as an accessory subunit for the core PRC2 (Polycomb repressive complex 2) complex, which mediates histone H3K27 (H3K27me3) trimethylation on chromatin. Binds DNA and mediates the recruitment of the PRC2 complex to target genes in embryonic stem cells, thereby playing a key role in stem cell differentiation and normal embryonic development. In cardiac cells, it is required to repress expression of cyclin-D1 (CCND1) by activating methylation of 'Lys-9' of histone H3 (H3K9me) by the GLP1/EHMT1 and G9a/EHMT2 histone methyltransferases. Also acts as a transcriptional repressor of ANF via its interaction with GATA4 and NKX2-5. Participates in the negative regulation of cell proliferation signaling. Does not have histone demethylase activity. This Gallus gallus (Chicken) protein is Protein Jumonji (JARID2).